Consider the following 306-residue polypeptide: MAAPIPQGFSCLSRFLGWWFRQPVLVTQSAAIVPVRTKKRFTPPIYQPKFKTEKEFMQHARKAGLVIPPEKSDRSIHLACTAGIFDAYVPPEGDARISSLSKEGLIERTERMKKTMASQVSIRRIKDYDANFKIKDFPEKAKDIFIEAHLCLNNSDHDRLHTLVTEHCFPDMTWDIKYKTVRWSFVESLEPSHVVQVRCSSMMNQGNVYGQITVRMHTRQTLAIYDRFGRLMYGQEDVPKDVLEYVVFEKQLTNPYGSWRMHTKIVPPWAPPKQPILKTVMIPGPQLKPEEEYEEAQGEAQKPQLA.

The segment at 287–306 (LKPEEEYEEAQGEAQKPQLA) is disordered.

Belongs to the mitochondrion-specific ribosomal protein mL45 family. In terms of assembly, component of the mitochondrial large ribosomal subunit (mt-LSU). Mature mammalian 55S mitochondrial ribosomes consist of a small (28S) and a large (39S) subunit. The 28S small subunit contains a 12S ribosomal RNA (12S mt-rRNA) and 30 different proteins. The 39S large subunit contains a 16S rRNA (16S mt-rRNA), a copy of mitochondrial valine transfer RNA (mt-tRNA(Val)), which plays an integral structural role, and 52 different proteins.

The protein resides in the mitochondrion. Its function is as follows. Component of the mitochondrial large ribosomal subunit (mt-LSU). Within the mitochondrial ribosomes, required to direct the nascent polypeptide toward the tunnel exit and position the exit at a distance from the membrane surface. This is Large ribosomal subunit protein mL45 from Homo sapiens (Human).